The sequence spans 124 residues: Large ribosomal subunit protein bL12 (124 aa).

It belongs to the bacterial ribosomal protein bL12 family. In terms of assembly, homodimer. Part of the ribosomal stalk of the 50S ribosomal subunit. Forms a multimeric L10(L12)X complex, where L10 forms an elongated spine to which 2 to 4 L12 dimers bind in a sequential fashion. Binds GTP-bound translation factors.

Forms part of the ribosomal stalk which helps the ribosome interact with GTP-bound translation factors. Is thus essential for accurate translation. The protein is Large ribosomal subunit protein bL12 of Rickettsia akari (strain Hartford).